A 369-amino-acid chain; its full sequence is MFNARRLIAATLLMSCAFGAHAERLKDIASISGVRANQLIGYGLVVGLNGTGDQTTQTPFTLQTFNNMLSQFGIKVPPGSGNVQLKNVAAVSVHADLPPFAKPGQVVDITVSSIGNSKSLRGGSLLMTPLKGIDGNVYAIAQGNLVVGGFDAEGRDGSKITVNVPSAGRIPGGASVERAVPSGFNQGNSLTLNLNRPDFTTAKRIVDKVNELLGPGVAQAVDGGSVRVTAPMDPSQRVDYLSILENLEIDPGQAVAKVIINSRTGTIVIGQNVKVSPAAVTHGSLTVTITEDPIVSQPGPFSNGQTAVVPRSRVNAQQEAKPMFKFGPGTTLDEIVRAVNQVGAAPSDLMAILEALKQAGALQADLIVI.

A signal peptide spans 1–22; it reads MFNARRLIAATLLMSCAFGAHA.

Belongs to the FlgI family. The basal body constitutes a major portion of the flagellar organelle and consists of four rings (L,P,S, and M) mounted on a central rod.

The protein localises to the periplasm. Its subcellular location is the bacterial flagellum basal body. Functionally, assembles around the rod to form the L-ring and probably protects the motor/basal body from shearing forces during rotation. The polypeptide is Flagellar P-ring protein (Pseudomonas entomophila (strain L48)).